Here is a 502-residue protein sequence, read N- to C-terminus: Inosine-5'-monophosphate dehydrogenase 2 (502 aa).

Position 2 is an N-acetylserine (S2). The CBS domain maps to M166–S225. NAD(+)-binding positions include D264–S266 and G314–G316. The K(+) site is built by G316 and G318. S319 contributes to the IMP binding site. C321 contacts K(+). The active-site Thioimidate intermediate is the C321. Residues D354–G356, G377–S378, and Y401–G405 contribute to the IMP site. Residue R417 is the Proton acceptor of the active site. Q429 contributes to the IMP binding site. Positions 488, 489, and 490 each coordinate K(+).

The protein belongs to the IMPDH/GMPR family. Homotetramer. The cofactor is K(+).

The protein resides in the cytoplasm. The enzyme catalyses IMP + NAD(+) + H2O = XMP + NADH + H(+). The protein operates within purine metabolism; XMP biosynthesis via de novo pathway; XMP from IMP: step 1/1. Its activity is regulated as follows. Mycophenolic acid (MPA) is a non-competitive inhibitor that prevents formation of the closed enzyme conformation by binding to the same site as the amobile flap. In contrast, mizoribine monophosphate (MZP) is a competitive inhibitor that induces the closed conformation. MPA is a potent inhibitor of mammalian IMPDHs but a poor inhibitor of the bacterial enzymes. MZP is a more potent inhibitor of bacterial IMPDH. Catalyzes the conversion of inosine 5'-phosphate (IMP) to xanthosine 5'-phosphate (XMP), the first committed and rate-limiting step in the de novo synthesis of guanine nucleotides, and therefore plays an important role in the regulation of cell growth. The polypeptide is Inosine-5'-monophosphate dehydrogenase 2 (Arabidopsis thaliana (Mouse-ear cress)).